A 688-amino-acid polypeptide reads, in one-letter code: Translation initiation factor IF-2 (688 aa).

Composition is skewed to basic and acidic residues over residues 53-62 (GKEKSEKTKE) and 86-95 (KRDDKNEKVN). Positions 53 to 100 (GKEKSEKTKEEDDEIETTAKNPIKESMNNKKSNKRDDKNEKVNTENAE) are disordered. Residues 187–354 (KRSPIITVMG…MILLSSEILE (168 aa)) form the tr-type G domain. The segment at 196 to 203 (GHVDHGKT) is G1. 196 to 203 (GHVDHGKT) is a GTP binding site. The tract at residues 221-225 (GITQH) is G2. The interval 242-245 (DTPG) is G3. GTP contacts are provided by residues 242 to 246 (DTPGH) and 296 to 299 (NKID). A G4 region spans residues 296–299 (NKID). Residues 332 to 334 (SAH) form a G5 region.

This sequence belongs to the TRAFAC class translation factor GTPase superfamily. Classic translation factor GTPase family. IF-2 subfamily.

The protein resides in the cytoplasm. In terms of biological role, one of the essential components for the initiation of protein synthesis. Protects formylmethionyl-tRNA from spontaneous hydrolysis and promotes its binding to the 30S ribosomal subunits. Also involved in the hydrolysis of GTP during the formation of the 70S ribosomal complex. This is Translation initiation factor IF-2 from Clostridium botulinum (strain Loch Maree / Type A3).